We begin with the raw amino-acid sequence, 594 residues long: DNA ligase (594 aa).

ATP is bound at residue Glu280. Lys282 acts as the N6-AMP-lysine intermediate in catalysis. ATP is bound by residues Arg287, Arg316, Glu345, Phe385, Arg456, and Lys462.

The protein belongs to the ATP-dependent DNA ligase family. Mg(2+) serves as cofactor.

It catalyses the reaction ATP + (deoxyribonucleotide)n-3'-hydroxyl + 5'-phospho-(deoxyribonucleotide)m = (deoxyribonucleotide)n+m + AMP + diphosphate.. Its function is as follows. DNA ligase that seals nicks in double-stranded DNA during DNA replication, DNA recombination and DNA repair. This chain is DNA ligase, found in Halorubrum lacusprofundi (strain ATCC 49239 / DSM 5036 / JCM 8891 / ACAM 34).